The primary structure comprises 481 residues: 3-isopropylmalate dehydratase large subunit (481 aa).

Residues cysteine 357, cysteine 417, and cysteine 420 each coordinate [4Fe-4S] cluster. Positions 429 to 441 are enriched in polar residues; sequence SPGQRCASTSNRN. Residues 429 to 451 are disordered; it reads SPGQRCASTSNRNFEGRQGKGGR.

The protein belongs to the aconitase/IPM isomerase family. LeuC type 1 subfamily. Heterodimer of LeuC and LeuD. [4Fe-4S] cluster is required as a cofactor.

It catalyses the reaction (2R,3S)-3-isopropylmalate = (2S)-2-isopropylmalate. It functions in the pathway amino-acid biosynthesis; L-leucine biosynthesis; L-leucine from 3-methyl-2-oxobutanoate: step 2/4. Its function is as follows. Catalyzes the isomerization between 2-isopropylmalate and 3-isopropylmalate, via the formation of 2-isopropylmaleate. The chain is 3-isopropylmalate dehydratase large subunit from Mycobacterium sp. (strain KMS).